Reading from the N-terminus, the 229-residue chain is 2,3-bisphosphoglycerate-dependent phosphoglycerate mutase (229 aa).

Residues 7–14, 20–21, Arg-59, 86–89, Lys-97, 113–114, and 182–183 contribute to the substrate site; these read RHGQSEWN, TG, ERHY, RR, and GN. The Tele-phosphohistidine intermediate role is filled by His-8. Catalysis depends on Glu-86, which acts as the Proton donor/acceptor.

Belongs to the phosphoglycerate mutase family. BPG-dependent PGAM subfamily.

It catalyses the reaction (2R)-2-phosphoglycerate = (2R)-3-phosphoglycerate. It participates in carbohydrate degradation; glycolysis; pyruvate from D-glyceraldehyde 3-phosphate: step 3/5. Its function is as follows. Catalyzes the interconversion of 2-phosphoglycerate and 3-phosphoglycerate. This Listeria welshimeri serovar 6b (strain ATCC 35897 / DSM 20650 / CCUG 15529 / CIP 8149 / NCTC 11857 / SLCC 5334 / V8) protein is 2,3-bisphosphoglycerate-dependent phosphoglycerate mutase.